A 364-amino-acid polypeptide reads, in one-letter code: Aminomethyltransferase (364 aa).

Belongs to the GcvT family. The glycine cleavage system is composed of four proteins: P, T, L and H.

The enzyme catalyses N(6)-[(R)-S(8)-aminomethyldihydrolipoyl]-L-lysyl-[protein] + (6S)-5,6,7,8-tetrahydrofolate = N(6)-[(R)-dihydrolipoyl]-L-lysyl-[protein] + (6R)-5,10-methylene-5,6,7,8-tetrahydrofolate + NH4(+). In terms of biological role, the glycine cleavage system catalyzes the degradation of glycine. In Escherichia coli O6:H1 (strain CFT073 / ATCC 700928 / UPEC), this protein is Aminomethyltransferase.